Consider the following 644-residue polypeptide: Threonine--tRNA ligase (644 aa).

Residues 1–62 (MSFSITLPDG…DSDSEVAIIT (62 aa)) form the TGS domain. Residues 240–538 (DHRTIGRDLD…LTEIYKGAFP (299 aa)) are catalytic. Zn(2+) contacts are provided by Cys334, His385, and His515.

This sequence belongs to the class-II aminoacyl-tRNA synthetase family. As to quaternary structure, homodimer. Requires Zn(2+) as cofactor.

Its subcellular location is the cytoplasm. The enzyme catalyses tRNA(Thr) + L-threonine + ATP = L-threonyl-tRNA(Thr) + AMP + diphosphate + H(+). Its function is as follows. Catalyzes the attachment of threonine to tRNA(Thr) in a two-step reaction: L-threonine is first activated by ATP to form Thr-AMP and then transferred to the acceptor end of tRNA(Thr). Also edits incorrectly charged L-seryl-tRNA(Thr). This is Threonine--tRNA ligase from Lactobacillus helveticus (strain DPC 4571).